The following is a 256-amino-acid chain: uncharacterized protein (256 aa).

Residues Ile18, Ser37, Lys46, Asp66, Tyr164, Lys168, Val197, and Thr199 each contribute to the NADP(+) site. Tyr164 serves as the catalytic Proton donor. The Lowers pKa of active site Tyr role is filled by Lys168.

It belongs to the short-chain dehydrogenases/reductases (SDR) family.

The protein localises to the cytoplasm. This is an uncharacterized protein from Saccharomyces cerevisiae (strain ATCC 204508 / S288c) (Baker's yeast).